The sequence spans 255 residues: MAVISMKQLLEAGVHFGHQTRRWNPKMAKYIFTERNGIHVIDLQQTVKLADQAYEFVRDAAANDAVILFVGTKKQAAEAVADEATRAGQYFINHRWLGGTLTNWGTIQKRIARLKEIKRMEEEGTFDVLPKKEVALLNKQRARLEKFLGGIEDMPRIPDVMYVVDPHKEQIAVKEAKKLGIPVVAMVDTNADPDDIDIIIPANDDAIRAVKLITAKLADAIIEGRQGEDADVAFEADTQADSIEEIVEVVEGDNA.

It belongs to the universal ribosomal protein uS2 family.

This chain is Small ribosomal subunit protein uS2 (rpsB), found in Streptococcus pyogenes serotype M1.